A 91-amino-acid chain; its full sequence is Probable Fe(2+)-trafficking protein (91 aa).

Belongs to the Fe(2+)-trafficking protein family.

Its function is as follows. Could be a mediator in iron transactions between iron acquisition and iron-requiring processes, such as synthesis and/or repair of Fe-S clusters in biosynthetic enzymes. This chain is Probable Fe(2+)-trafficking protein, found in Paraburkholderia phytofirmans (strain DSM 17436 / LMG 22146 / PsJN) (Burkholderia phytofirmans).